Reading from the N-terminus, the 429-residue chain is Nocturnin (429 aa).

The transit peptide at 1-73 directs the protein to the mitochondrion; sequence MYQSPRRLCS…SMGNGTSRLY (73 aa). The interval 21-68 is disordered; that stretch reads RRTLVPGPRRTLAPPVLGSRPKSPQLQAAAASGAARSRPRTVSSMGNG. Glutamate 193 is a Mg(2+) binding site. Substrate is bound by residues glutamate 193, 217–219, asparagine 261, 284–287, and 322–324; these read KPW, HLKA, and DFN. The segment at 341–351 is interaction with PPARG; the sequence is NLNSAYKLLSP. A substrate-binding site is contributed by histidine 412.

The protein belongs to the CCR4/nocturin family. As to quaternary structure, interacts with PPARG. Mg(2+) serves as cofactor. In terms of tissue distribution, highly expressed in the differentiated adipocyte (at protein level). Ubiquitous.

It localises to the cytoplasm. The protein resides in the nucleus. Its subcellular location is the perinuclear region. It is found in the mitochondrion. The catalysed reaction is NADP(+) + H2O = phosphate + NAD(+). The enzyme catalyses NADPH + H2O = phosphate + NADH. In terms of biological role, phosphatase which catalyzes the conversion of NADP(+) to NAD(+) and of NADPH to NADH. Shows a small preference for NADPH over NADP(+). Represses translation and promotes degradation of target mRNA molecules. Plays an important role in post-transcriptional regulation of metabolic genes under circadian control. Exerts a rhythmic post-transcriptional control of genes necessary for metabolic functions including nutrient absorption, glucose/insulin sensitivity, lipid metabolism, adipogenesis, inflammation and osteogenesis. Plays an important role in favoring adipogenesis over osteoblastogenesis and acts as a key regulator of the adipogenesis/osteogenesis balance. Promotes adipogenesis by facilitating PPARG nuclear translocation which activates its transcriptional activity. Regulates circadian expression of NOS2 in the liver and negatively regulates the circadian expression of IGF1 in the bone. Critical for proper development of early embryos. The chain is Nocturnin from Mus musculus (Mouse).